The sequence spans 85 residues: uncharacterized protein (85 aa).

Ser-22 bears the Phosphoserine mark.

It localises to the cytoplasm. Its subcellular location is the nucleus. This is an uncharacterized protein from Saccharomyces cerevisiae (strain ATCC 204508 / S288c) (Baker's yeast).